Reading from the N-terminus, the 238-residue chain is Endothelial protein C receptor (238 aa).

The N-terminal stretch at 1 to 17 (MLTTLLPILLLSGWAFC) is a signal peptide. Residues 18 to 210 (SQDASDGLQR…GSQTSRSYTS (193 aa)) are Extracellular-facing. N-linked (GlcNAc...) asparagine glycans are attached at residues N47, N64, N136, and N172. C118 and C186 are oxidised to a cystine. The chain crosses the membrane as a helical span at residues 211–231 (LVLGVLVGSFIIAGVAVGIFL). Residues 232 to 238 (CTGGRRC) lie on the Cytoplasmic side of the membrane.

Post-translationally, N-glycosylated. In terms of processing, a soluble form exists; probably released by a metalloprotease. Seems to have the same activity as the membrane-bound form. In terms of tissue distribution, expressed strongly in the endothelial cells of arteries and veins in heart and lung, less intensely in capillaries in the lung and skin, and not at all in the endothelium of small vessels of the liver and kidney.

It is found in the membrane. Its function is as follows. Binds activated protein C. Enhances protein C activation by the thrombin-thrombomodulin complex; plays a role in the protein C pathway controlling blood coagulation. The sequence is that of Endothelial protein C receptor (PROCR) from Homo sapiens (Human).